The sequence spans 239 residues: MEFTPSFEQGTLIKRYKRFLTDIRLEDGSEVTIHCPNTGSMRNCLFEGKKVWFSISDNPKRKYSRTWEQAESDCGDIIGINTGRANQLAEDAIKSGVITELQDYDLLKREVKYGSENSRIDILLTDNDSHNEPKPHCYIEVKSCTLLEDGQGYFPDAVTTRGQKHLRELMEMVSMGHRAVLLFVVQHTGIESVMAAKHIDPDYAELLSQAHQAGVEILAYNTEMSPNQASLLKSCPVKL.

Belongs to the SfsA family.

In Shewanella woodyi (strain ATCC 51908 / MS32), this protein is Sugar fermentation stimulation protein homolog.